Reading from the N-terminus, the 179-residue chain is Large ribosomal subunit protein uL5 (179 aa).

It belongs to the universal ribosomal protein uL5 family. Part of the 50S ribosomal subunit; part of the 5S rRNA/L5/L18/L25 subcomplex. Contacts the 5S rRNA and the P site tRNA. Forms a bridge to the 30S subunit in the 70S ribosome.

In terms of biological role, this is one of the proteins that bind and probably mediate the attachment of the 5S RNA into the large ribosomal subunit, where it forms part of the central protuberance. In the 70S ribosome it contacts protein S13 of the 30S subunit (bridge B1b), connecting the 2 subunits; this bridge is implicated in subunit movement. Contacts the P site tRNA; the 5S rRNA and some of its associated proteins might help stabilize positioning of ribosome-bound tRNAs. This Vibrio vulnificus (strain CMCP6) protein is Large ribosomal subunit protein uL5.